Consider the following 538-residue polypeptide: Cytochrome c-552 (538 aa).

Positions 1–55 are cleaved as a signal peptide; it reads MKIYLRFVWILIIILNFLLNLFITTNGVIIVNAFKKSLIVAASFASLSLFNSATA. Residue His-133 coordinates heme c. Heme-binding residues include Cys-161, Cys-164, and Lys-165. Residues Cys-199, Cys-202, His-203, Cys-264, Cys-267, and His-268 each coordinate heme c. Positions 270, 271, 316, and 318 each coordinate Ca(2+). Tyr-271 is a binding site for substrate. His-319 contributes to the substrate binding site. 9 residues coordinate heme c: His-330, Cys-337, Cys-340, His-341, His-356, Cys-369, Cys-372, His-373, and His-448.

Belongs to the cytochrome c-552 family. Ca(2+) serves as cofactor. The cofactor is heme c.

The protein resides in the periplasm. It catalyses the reaction 6 Fe(III)-[cytochrome c] + NH4(+) + 2 H2O = 6 Fe(II)-[cytochrome c] + nitrite + 8 H(+). The protein operates within nitrogen metabolism; nitrate reduction (assimilation). Functionally, catalyzes the reduction of nitrite to ammonia, consuming six electrons in the process. The polypeptide is Cytochrome c-552 (Haemophilus influenzae (strain 86-028NP)).